We begin with the raw amino-acid sequence, 589 residues long: Actin-histidine N-methyltransferase (589 aa).

The tract at residues 1–22 is disordered; sequence MGKKSRVKTQKSGTGATATVSP. The span at 10-20 shows a compositional bias: polar residues; that stretch reads QKSGTGATATV. Residues arginine 75, 104-106, arginine 254, 275-279, and 325-327 each bind S-adenosyl-L-methionine; these read EGF, DMCNH, and SGF. Positions 94–314 constitute an SET domain; sequence EGFEMVNFKE…AGEQIYIFYG (221 aa). Serine 513 bears the Phosphoserine mark. Residues 547–589 form a disordered region; it reads LVNGERSFPNGTRSEEDLKQEERKRAKGDAKESSSDSTDAVKE. Basic and acidic residues predominate over residues 559-589; it reads RSEEDLKQEERKRAKGDAKESSSDSTDAVKE.

Belongs to the class V-like SAM-binding methyltransferase superfamily. SETD3 actin-histidine methyltransferase family. Interacts with MYOD1. Post-translationally, phosphorylated by GSK3B, which is required for recognition by the SCF(FBXW7) complex and subsequent degradation. Ubiquitinated by the SCF(FBXW7) complex following phosphorylation by GSK3B, leading to its degradation by the proteasome.

The protein resides in the cytoplasm. It is found in the nucleus. It carries out the reaction L-histidyl-[protein] + S-adenosyl-L-methionine = N(tele)-methyl-L-histidyl-[protein] + S-adenosyl-L-homocysteine + H(+). Its function is as follows. Protein-histidine N-methyltransferase that specifically mediates 3-methylhistidine (tele-methylhistidine) methylation of actin at 'His-73'. Histidine methylation of actin is required for smooth muscle contraction of the laboring uterus during delivery. Does not have protein-lysine N-methyltransferase activity and probably only catalyzes histidine methylation of actin. This is Actin-histidine N-methyltransferase from Dasypus novemcinctus (Nine-banded armadillo).